Here is a 222-residue protein sequence, read N- to C-terminus: Octanoyltransferase (222 aa).

The BPL/LPL catalytic domain maps to glycine 35–aspartate 214. Substrate-binding positions include arginine 73–histidine 80, alanine 145–glycine 147, and glycine 158–serine 160. Cysteine 176 acts as the Acyl-thioester intermediate in catalysis.

The protein belongs to the LipB family.

The protein localises to the cytoplasm. The enzyme catalyses octanoyl-[ACP] + L-lysyl-[protein] = N(6)-octanoyl-L-lysyl-[protein] + holo-[ACP] + H(+). The protein operates within protein modification; protein lipoylation via endogenous pathway; protein N(6)-(lipoyl)lysine from octanoyl-[acyl-carrier-protein]: step 1/2. Functionally, catalyzes the transfer of endogenously produced octanoic acid from octanoyl-acyl-carrier-protein onto the lipoyl domains of lipoate-dependent enzymes. Lipoyl-ACP can also act as a substrate although octanoyl-ACP is likely to be the physiological substrate. This is Octanoyltransferase from Novosphingobium aromaticivorans (strain ATCC 700278 / DSM 12444 / CCUG 56034 / CIP 105152 / NBRC 16084 / F199).